Consider the following 197-residue polypeptide: Large ribosomal subunit protein uL13A (197 aa).

At Ser151 the chain carries Phosphoserine.

This sequence belongs to the universal ribosomal protein uL13 family. In terms of assembly, component of the large ribosomal subunit (LSU). Mature yeast ribosomes consist of a small (40S) and a large (60S) subunit. The 40S small subunit contains 1 molecule of ribosomal RNA (18S rRNA) and at least 33 different proteins. The large 60S subunit contains 3 rRNA molecules (25S, 5.8S and 5S rRNA) and at least 46 different proteins.

It localises to the cytoplasm. The protein resides in the nucleus. It is found in the nucleolus. Component of the ribosome, a large ribonucleoprotein complex responsible for the synthesis of proteins in the cell. The small ribosomal subunit (SSU) binds messenger RNAs (mRNAs) and translates the encoded message by selecting cognate aminoacyl-transfer RNA (tRNA) molecules. The large subunit (LSU) contains the ribosomal catalytic site termed the peptidyl transferase center (PTC), which catalyzes the formation of peptide bonds, thereby polymerizing the amino acids delivered by tRNAs into a polypeptide chain. The nascent polypeptides leave the ribosome through a tunnel in the LSU and interact with protein factors that function in enzymatic processing, targeting, and the membrane insertion of nascent chains at the exit of the ribosomal tunnel. This chain is Large ribosomal subunit protein uL13A (rpl1602), found in Schizosaccharomyces pombe (strain 972 / ATCC 24843) (Fission yeast).